We begin with the raw amino-acid sequence, 1051 residues long: Serine/threonine-protein kinase ULK1 (1051 aa).

Residues 16–278 (FSRKDLIGHG…FDEFFHHPFL (263 aa)) form the Protein kinase domain. Residues 22-30 (IGHGAFAVV) and K46 each bind ATP. D138 serves as the catalytic Proton acceptor. An N6-acetyllysine modification is found at K162. Disordered stretches follow at residues 283–323 (PIKK…EMPQ), 335–358 (AGFL…DDFV), and 394–554 (GLES…CRLH). Positions 287-416 (SPPVPVPSYP…TCSSSPSPSG (130 aa)) are interaction with GABARAP and GABARAPL2. Low complexity-rich tracts occupy residues 295-318 (YPSS…PPSL), 340-349 (GSRDSGGSSK), and 400-423 (RTPS…PFSS). A Phosphoserine; by AMPK modification is found at S317. S403 and S450 each carry phosphoserine. The segment covering 437–459 (QVHNYQRIEQNLQSPTQQQTARS) has biased composition (polar residues). Residue T456 is modified to Phosphothreonine. Phosphoserine is present on residues S467, S477, S479, and S521. Residue S555 is modified to Phosphoserine; by AMPK. T574 is modified (phosphothreonine). Residue K606 is modified to N6-acetyllysine. T635 is subject to Phosphothreonine. S637 is subject to Phosphoserine; by AMPK. S638 is subject to Phosphoserine. Disordered stretches follow at residues 661–686 (PDLS…DTRG) and 727–787 (APSA…TGSS). A compositionally biased stretch (gly residues) spans 731 to 745 (GFGGTLHPGARGGGA). Position 757 is a phosphoserine; by MTOR (S757). S774 carries the post-translational modification Phosphoserine. The span at 774 to 787 (SVGSSSSLGSTGSS) shows a compositional bias: low complexity. Phosphoserine; by AMPK is present on S777. The interval 829-1051 (PDLPEETLME…LSALLSGVYA (223 aa)) is C-terminal domain; mediates interaction with SESN2.

The protein belongs to the protein kinase superfamily. Ser/Thr protein kinase family. APG1/unc-51/ULK1 subfamily. Interacts with GABARAP and GABARAPL2. Interacts (via C-terminus) with ATG13. Part of a complex consisting of ATG13, ATG101, ULK1 and RB1CC1. Associates with the mammalian target of rapamycin complex 1 (mTORC1) through an interaction with RPTOR; the association depends on nutrient conditions and is reduced during starvation. Interacts with FEZ1; SCOC interferes with FEZ1-binding. Interacts with TBC1D14. Interacts (phosphorylated form) with TRIM5. When phosphorylated at Ser-317, interacts with MEFV and BECN1 simultaneously. Interacts with TRIM21 and IRF3, in the presence of TRIM21. Interacts with SESN2. Interacts with SQSTM1. Interacts with C9orf72. Interacts with WDR45. Interacts with ATG13; this interaction is increased in the absence of TMEM39A. Interacts with WIPI2. Interacts with ATP2A2. Interacts with AMBRA1. Interacts with Irgm1; promoting the coassembly of ULK1 and BECN1. Post-translationally, autophosphorylated. Phosphorylated under nutrient-rich conditions; dephosphorylated during starvation or following treatment with rapamycin. In response to nutrient limitation, phosphorylated and activated by AMPK, leading to activate autophagy. Under nutrient sufficiency, phosphorylated by MTOR/mTOR, disrupting the interaction with AMPK and preventing activation of ULK1. In terms of processing, ubiquitinated via 'Lys-63'-linkage by a complex composed of AMBRA1 and TRAF6 following autophagy induction, promoting ULK1 stability and kinase activity. Deubiquitinated by USP20; leading to ULK1 stability and autophagy initiation. Acetylated by KAT5/TIP60 under autophagy induction, promoting protein kinase activity.

It is found in the cytoplasm. The protein localises to the cytosol. It localises to the preautophagosomal structure. The enzyme catalyses L-seryl-[protein] + ATP = O-phospho-L-seryl-[protein] + ADP + H(+). The catalysed reaction is L-threonyl-[protein] + ATP = O-phospho-L-threonyl-[protein] + ADP + H(+). With respect to regulation, acetylation by KAT5/TIP60 stimulates the protein kinase activity. The protein kinase activity is activated by unanchored 'Lys-63'-linked polyubiquitin chains: unanchored 'Lys-63'-linked polyubiquitin chains are catalyzed by TRIM32 in an AMBRA1-dependent manner. In terms of biological role, serine/threonine-protein kinase involved in autophagy in response to starvation. Acts upstream of phosphatidylinositol 3-kinase PIK3C3 to regulate the formation of autophagophores, the precursors of autophagosomes. Part of regulatory feedback loops in autophagy: acts both as a downstream effector and negative regulator of mammalian target of rapamycin complex 1 (mTORC1) via interaction with RPTOR. Activated via phosphorylation by AMPK and also acts as a regulator of AMPK by mediating phosphorylation of AMPK subunits PRKAA1, PRKAB2 and PRKAG1, leading to negatively regulate AMPK activity. May phosphorylate ATG13/KIAA0652 and RPTOR; however such data need additional evidences. Plays a role early in neuronal differentiation and is required for granule cell axon formation. Also phosphorylates SESN2 and SQSTM1 to regulate autophagy. Phosphorylates FLCN, promoting autophagy. Phosphorylates AMBRA1 in response to autophagy induction, releasing AMBRA1 from the cytoskeletal docking site to induce autophagosome nucleation. Phosphorylates ATG4B, leading to inhibit autophagy by decreasing both proteolytic activation and delipidation activities of ATG4B. The polypeptide is Serine/threonine-protein kinase ULK1 (Ulk1) (Mus musculus (Mouse)).